Here is a 467-residue protein sequence, read N- to C-terminus: Abscisic acid 8'-hydroxylase 1 (467 aa).

The helical transmembrane segment at 5-24 (ALFLTLFAGSLFLYFLRCLI) threads the bilayer. C411 lines the heme pocket.

It belongs to the cytochrome P450 family. Heme is required as a cofactor. As to expression, mainly expressed in flowers, siliques, roots and stems. Lower expression in rosette leaves and dry seeds. Expressed in vascular tissues of embryo during the seed development.

It localises to the membrane. It carries out the reaction 2-cis-(+)-abscisate + reduced [NADPH--hemoprotein reductase] + O2 = (+)-8'-hydroxyabscisate + oxidized [NADPH--hemoprotein reductase] + H2O + H(+). It participates in plant hormone degradation; abscisic acid degradation. Its function is as follows. Involved in the oxidative degradation of abscisic acid. Plays an important role in determining abscisic acid levels in dry seeds and in the control of postgermination growth. This chain is Abscisic acid 8'-hydroxylase 1 (CYP707A1), found in Arabidopsis thaliana (Mouse-ear cress).